A 489-amino-acid chain; its full sequence is Rhamnulokinase (489 aa).

13 to 17 (ASSGR) lines the ATP pocket. The cysteines at positions 68 and 222 are disulfide-linked. Residues Gly-83 and 236–238 (HDT) contribute to the substrate site. Catalysis depends on Asp-237, which acts as the Proton acceptor. Thr-259 contacts ATP. Substrate is bound at residue Asn-296. Residue Gln-304 coordinates ATP. An intrachain disulfide couples Cys-353 to Cys-370. Position 402 (Gly-402) interacts with ATP. Cys-413 and Cys-417 are joined by a disulfide.

The protein belongs to the rhamnulokinase family. Requires Mg(2+) as cofactor.

The catalysed reaction is L-rhamnulose + ATP = L-rhamnulose 1-phosphate + ADP + H(+). Its pathway is carbohydrate degradation; L-rhamnose degradation; glycerone phosphate from L-rhamnose: step 2/3. In terms of biological role, involved in the catabolism of L-rhamnose (6-deoxy-L-mannose). Catalyzes the transfer of the gamma-phosphate group from ATP to the 1-hydroxyl group of L-rhamnulose to yield L-rhamnulose 1-phosphate. The polypeptide is Rhamnulokinase (Salmonella agona (strain SL483)).